The primary structure comprises 158 residues: Cyclic pyranopterin monophosphate synthase (158 aa).

Substrate contacts are provided by residues M74 to H76 and M112 to E113. The active site involves D127.

It belongs to the MoaC family. In terms of assembly, homohexamer; trimer of dimers.

It catalyses the reaction (8S)-3',8-cyclo-7,8-dihydroguanosine 5'-triphosphate = cyclic pyranopterin phosphate + diphosphate. It participates in cofactor biosynthesis; molybdopterin biosynthesis. Its function is as follows. Catalyzes the conversion of (8S)-3',8-cyclo-7,8-dihydroguanosine 5'-triphosphate to cyclic pyranopterin monophosphate (cPMP). In Helicobacter pylori (strain G27), this protein is Cyclic pyranopterin monophosphate synthase.